The chain runs to 484 residues: Calcium-dependent protein kinase 31 (484 aa).

The N-myristoyl glycine moiety is linked to residue G2. Residues 28-290 enclose the Protein kinase domain; it reads YILGDELGQG…AAEVLGHPWM (263 aa). ATP is bound by residues 34 to 42 and K57; that span reads LGQGQFGIT. The active-site Proton acceptor is the D156. S196 is subject to Phosphoserine. The autoinhibitory domain stretch occupies residues 295–325; that stretch reads ASDKPIDGVVLSRLKQFRDMNKLKKVALKVI. 4 consecutive EF-hand domains span residues 332-367, 368-403, 404-439, and 444-474; these read EEIK…LGSN, LSKT…RYRL, DRDD…HGVG, and IKQI…GSSL. Ca(2+)-binding residues include D345, D347, S349, T351, E356, D381, D383, N385, T387, E392, D417, D419, D421, H423, E428, D452, D454, D456, K458, and E463.

It belongs to the protein kinase superfamily. Ser/Thr protein kinase family. CDPK subfamily.

Its subcellular location is the membrane. The enzyme catalyses L-seryl-[protein] + ATP = O-phospho-L-seryl-[protein] + ADP + H(+). It catalyses the reaction L-threonyl-[protein] + ATP = O-phospho-L-threonyl-[protein] + ADP + H(+). Its activity is regulated as follows. Activated by calcium. Autophosphorylation may play an important role in the regulation of the kinase activity. In terms of biological role, may play a role in signal transduction pathways that involve calcium as a second messenger. The sequence is that of Calcium-dependent protein kinase 31 (CPK31) from Arabidopsis thaliana (Mouse-ear cress).